The following is a 242-amino-acid chain: Phosphate import ATP-binding protein PstB 1 (242 aa).

In terms of domain architecture, ABC transporter spans 1–237; that stretch reads MDLYYGSYRA…PKDQRTEDYI (237 aa). 28-35 lines the ATP pocket; it reads GPSGCGKS.

This sequence belongs to the ABC transporter superfamily. Phosphate importer (TC 3.A.1.7) family. As to quaternary structure, the complex is composed of two ATP-binding proteins (PstB), two transmembrane proteins (PstC and PstA) and a solute-binding protein (PstS).

Its subcellular location is the cell membrane. The catalysed reaction is phosphate(out) + ATP + H2O = ADP + 2 phosphate(in) + H(+). Part of the ABC transporter complex PstSACB involved in phosphate import. Responsible for energy coupling to the transport system. This Symbiobacterium thermophilum (strain DSM 24528 / JCM 14929 / IAM 14863 / T) protein is Phosphate import ATP-binding protein PstB 1.